A 113-amino-acid chain; its full sequence is CRISPR-associated endoribonuclease Cas2 (113 aa).

Asp-33 lines the Mg(2+) pocket.

The protein belongs to the CRISPR-associated endoribonuclease Cas2 protein family. As to quaternary structure, homodimer, forms a heterotetramer with a Cas1 homodimer. Mg(2+) is required as a cofactor.

Functionally, CRISPR (clustered regularly interspaced short palindromic repeat), is an adaptive immune system that provides protection against mobile genetic elements (viruses, transposable elements and conjugative plasmids). CRISPR clusters contain sequences complementary to antecedent mobile elements and target invading nucleic acids. CRISPR clusters are transcribed and processed into CRISPR RNA (crRNA). Functions as a ssRNA-specific endoribonuclease. Involved in the integration of spacer DNA into the CRISPR cassette. The type III-A Csm effector complex binds crRNA and acts as a crRNA-guided RNase, DNase and cyclic oligoadenylate synthase; binding of target RNA cognate to the crRNA is required for all activities. This Mycobacterium tuberculosis (strain CDC 1551 / Oshkosh) protein is CRISPR-associated endoribonuclease Cas2.